A 361-amino-acid polypeptide reads, in one-letter code: Carbamoyl phosphate synthase small chain (361 aa).

Residues 1 to 173 are CPSase; sequence MRAALALEDG…SVREEYRFSD (173 aa). Ser-45, Gly-225, and Gly-227 together coordinate L-glutamine. The 185-residue stretch at 177–361 folds into the Glutamine amidotransferase type-1 domain; sequence EIVVIDCGVK…DEFLAMCREH (185 aa). Residue Cys-252 is the Nucleophile of the active site. L-glutamine-binding residues include Leu-253, Gln-256, Asn-294, Gly-296, and Phe-297. Residues His-337 and Glu-339 contribute to the active site.

Belongs to the CarA family. Composed of two chains; the small (or glutamine) chain promotes the hydrolysis of glutamine to ammonia, which is used by the large (or ammonia) chain to synthesize carbamoyl phosphate. Tetramer of heterodimers (alpha,beta)4.

It carries out the reaction hydrogencarbonate + L-glutamine + 2 ATP + H2O = carbamoyl phosphate + L-glutamate + 2 ADP + phosphate + 2 H(+). The catalysed reaction is L-glutamine + H2O = L-glutamate + NH4(+). It participates in amino-acid biosynthesis; L-arginine biosynthesis; carbamoyl phosphate from bicarbonate: step 1/1. The protein operates within pyrimidine metabolism; UMP biosynthesis via de novo pathway; (S)-dihydroorotate from bicarbonate: step 1/3. Small subunit of the glutamine-dependent carbamoyl phosphate synthetase (CPSase). CPSase catalyzes the formation of carbamoyl phosphate from the ammonia moiety of glutamine, carbonate, and phosphate donated by ATP, constituting the first step of 2 biosynthetic pathways, one leading to arginine and/or urea and the other to pyrimidine nucleotides. The small subunit (glutamine amidotransferase) binds and cleaves glutamine to supply the large subunit with the substrate ammonia. This chain is Carbamoyl phosphate synthase small chain, found in Methanopyrus kandleri (strain AV19 / DSM 6324 / JCM 9639 / NBRC 100938).